The following is a 144-amino-acid chain: Small ribosomal subunit protein uS12 (144 aa).

Asp-103 is subject to 3-methylthioaspartic acid. The tract at residues 125–144 (QQGRSRYGAKKGKAAPAKKK) is disordered. Over residues 131–144 (YGAKKGKAAPAKKK) the composition is skewed to basic residues.

Belongs to the universal ribosomal protein uS12 family. As to quaternary structure, part of the 30S ribosomal subunit. Contacts proteins S8 and S17. May interact with IF1 in the 30S initiation complex.

Its function is as follows. With S4 and S5 plays an important role in translational accuracy. Interacts with and stabilizes bases of the 16S rRNA that are involved in tRNA selection in the A site and with the mRNA backbone. Located at the interface of the 30S and 50S subunits, it traverses the body of the 30S subunit contacting proteins on the other side and probably holding the rRNA structure together. The combined cluster of proteins S8, S12 and S17 appears to hold together the shoulder and platform of the 30S subunit. The polypeptide is Small ribosomal subunit protein uS12 (Dehalococcoides mccartyi (strain ATCC BAA-2100 / JCM 16839 / KCTC 5957 / BAV1)).